The following is a 32-amino-acid chain: Variegin (32 aa).

The tract at residues 1–32 (SDQGDVAEPKMHKTAPPFDFEAIPEEYLDDES) is disordered. The tract at residues 8–14 (EPKMHKT) is contains the active site. T14 is a glycosylation site (O-linked (Hex) threonine). Residues 22–32 (AIPEEYLDDES) show a composition bias toward acidic residues.

Interacts with human F2 (thrombin); the interaction results in thrombin inhibition.

The protein resides in the secreted. Its function is as follows. Thrombin inhibitor. Does not inhibit other serine proteases. The protein is Variegin of Amblyomma variegatum (Tropical bont tick).